Here is a 189-residue protein sequence, read N- to C-terminus: GTP cyclohydrolase 1 (189 aa).

The Zn(2+) site is built by C79, H82, and C150.

The protein belongs to the GTP cyclohydrolase I family. As to quaternary structure, toroid-shaped homodecamer, composed of two pentamers of five dimers.

It catalyses the reaction GTP + H2O = 7,8-dihydroneopterin 3'-triphosphate + formate + H(+). Its pathway is cofactor biosynthesis; 7,8-dihydroneopterin triphosphate biosynthesis; 7,8-dihydroneopterin triphosphate from GTP: step 1/1. This is GTP cyclohydrolase 1 from Rickettsia massiliae (strain Mtu5).